The following is a 158-amino-acid chain: 6,7-dimethyl-8-ribityllumazine synthase (158 aa).

5-amino-6-(D-ribitylamino)uracil contacts are provided by residues F24, 58 to 60, and 82 to 84; these read AFE and AVI. Residue 87-88 coordinates (2S)-2-hydroxy-3-oxobutyl phosphate; that stretch reads GT. The active-site Proton donor is H90. 5-amino-6-(D-ribitylamino)uracil is bound at residue F115. (2S)-2-hydroxy-3-oxobutyl phosphate is bound at residue R129.

This sequence belongs to the DMRL synthase family. As to quaternary structure, forms an icosahedral capsid composed of 60 subunits, arranged as a dodecamer of pentamers.

The enzyme catalyses (2S)-2-hydroxy-3-oxobutyl phosphate + 5-amino-6-(D-ribitylamino)uracil = 6,7-dimethyl-8-(1-D-ribityl)lumazine + phosphate + 2 H2O + H(+). It functions in the pathway cofactor biosynthesis; riboflavin biosynthesis; riboflavin from 2-hydroxy-3-oxobutyl phosphate and 5-amino-6-(D-ribitylamino)uracil: step 1/2. Functionally, catalyzes the formation of 6,7-dimethyl-8-ribityllumazine by condensation of 5-amino-6-(D-ribitylamino)uracil with 3,4-dihydroxy-2-butanone 4-phosphate. This is the penultimate step in the biosynthesis of riboflavin. This chain is 6,7-dimethyl-8-ribityllumazine synthase, found in Azotobacter vinelandii (strain DJ / ATCC BAA-1303).